The primary structure comprises 294 residues: MKDLPDRRLLLVHAHPDDESINNGATMARYAAEGAQVTLVTCTLGEEGEVIPPALAHLTPDRDDALGPYRVGELAAAMKELGVTDHRFLGGPGRYRDSGMMGGEQNHRAGAFWAADLDEAAGHLVAVVREVRPQVLVTYDPDGGYGHPDHIQAHRVAVRAAELAADPAFRPELGTPWEIAKVYWNRVPRPVAEEGFARLRLALPGTRFAKSAAVDDVPGVVDESVITTEIDGTPFAAAKAAAMRAHATQVEVDGPWFALSNELAQPLFTTEYYELVRGERGSPRETDLFEGVAP.

Residues His-15, Asp-18, and His-150 each contribute to the Zn(2+) site.

The protein belongs to the MshB deacetylase family. Requires Zn(2+) as cofactor.

It catalyses the reaction 1D-myo-inositol 2-acetamido-2-deoxy-alpha-D-glucopyranoside + H2O = 1D-myo-inositol 2-amino-2-deoxy-alpha-D-glucopyranoside + acetate. In terms of biological role, catalyzes the deacetylation of 1D-myo-inositol 2-acetamido-2-deoxy-alpha-D-glucopyranoside (GlcNAc-Ins) in the mycothiol biosynthesis pathway. The polypeptide is 1D-myo-inositol 2-acetamido-2-deoxy-alpha-D-glucopyranoside deacetylase (Streptomyces avermitilis (strain ATCC 31267 / DSM 46492 / JCM 5070 / NBRC 14893 / NCIMB 12804 / NRRL 8165 / MA-4680)).